Consider the following 194-residue polypeptide: ATP-dependent Clp protease proteolytic subunit 1 (194 aa).

The active-site Nucleophile is the Ser-99. His-124 is an active-site residue.

The protein belongs to the peptidase S14 family. Fourteen ClpP subunits assemble into 2 heptameric rings which stack back to back to give a disk-like structure with a central cavity, resembling the structure of eukaryotic proteasomes.

It localises to the cytoplasm. It carries out the reaction Hydrolysis of proteins to small peptides in the presence of ATP and magnesium. alpha-casein is the usual test substrate. In the absence of ATP, only oligopeptides shorter than five residues are hydrolyzed (such as succinyl-Leu-Tyr-|-NHMec, and Leu-Tyr-Leu-|-Tyr-Trp, in which cleavage of the -Tyr-|-Leu- and -Tyr-|-Trp bonds also occurs).. Its function is as follows. Cleaves peptides in various proteins in a process that requires ATP hydrolysis. Has a chymotrypsin-like activity. Plays a major role in the degradation of misfolded proteins. The chain is ATP-dependent Clp protease proteolytic subunit 1 from Borreliella burgdorferi (strain ATCC 35210 / DSM 4680 / CIP 102532 / B31) (Borrelia burgdorferi).